Reading from the N-terminus, the 436-residue chain is 3-ketoacyl-CoA thiolase (436 aa).

Cys-99 functions as the Acyl-thioester intermediate in the catalytic mechanism. Catalysis depends on proton acceptor residues His-392 and Cys-422.

The protein belongs to the thiolase-like superfamily. Thiolase family. Heterotetramer of two alpha chains (FadJ) and two beta chains (FadI).

The protein localises to the cytoplasm. It carries out the reaction an acyl-CoA + acetyl-CoA = a 3-oxoacyl-CoA + CoA. It functions in the pathway lipid metabolism; fatty acid beta-oxidation. Catalyzes the final step of fatty acid oxidation in which acetyl-CoA is released and the CoA ester of a fatty acid two carbons shorter is formed. This Salmonella choleraesuis (strain SC-B67) protein is 3-ketoacyl-CoA thiolase.